The following is a 94-amino-acid chain: Integration host factor subunit beta (94 aa).

Belongs to the bacterial histone-like protein family. In terms of assembly, heterodimer of an alpha and a beta chain.

Its function is as follows. This protein is one of the two subunits of integration host factor, a specific DNA-binding protein that functions in genetic recombination as well as in transcriptional and translational control. The polypeptide is Integration host factor subunit beta (Citrobacter koseri (strain ATCC BAA-895 / CDC 4225-83 / SGSC4696)).